Here is a 542-residue protein sequence, read N- to C-terminus: CTP synthase (542 aa).

The tract at residues 1–265 (MARYVFITGG…DDEVLAAFGI (265 aa)) is amidoligase domain. S13 contacts CTP. S13 provides a ligand contact to UTP. ATP contacts are provided by residues 14 to 19 (SLGKGI) and D71. Mg(2+) contacts are provided by D71 and E139. CTP is bound by residues 146-148 (DIE), 186-191 (KTKPTQ), and K222. UTP contacts are provided by residues 186-191 (KTKPTQ) and K222. The region spanning 291–541 (TIAIVGKYTG…IEAATEQSRL (251 aa)) is the Glutamine amidotransferase type-1 domain. L-glutamine is bound at residue G353. The Nucleophile; for glutamine hydrolysis role is filled by C380. Residues 381–384 (FGMQ), E404, and R469 each bind L-glutamine. Active-site residues include H514 and E516.

This sequence belongs to the CTP synthase family. In terms of assembly, homotetramer.

The enzyme catalyses UTP + L-glutamine + ATP + H2O = CTP + L-glutamate + ADP + phosphate + 2 H(+). It catalyses the reaction L-glutamine + H2O = L-glutamate + NH4(+). The catalysed reaction is UTP + NH4(+) + ATP = CTP + ADP + phosphate + 2 H(+). The protein operates within pyrimidine metabolism; CTP biosynthesis via de novo pathway; CTP from UDP: step 2/2. Its activity is regulated as follows. Allosterically activated by GTP, when glutamine is the substrate; GTP has no effect on the reaction when ammonia is the substrate. The allosteric effector GTP functions by stabilizing the protein conformation that binds the tetrahedral intermediate(s) formed during glutamine hydrolysis. Inhibited by the product CTP, via allosteric rather than competitive inhibition. Catalyzes the ATP-dependent amination of UTP to CTP with either L-glutamine or ammonia as the source of nitrogen. Regulates intracellular CTP levels through interactions with the four ribonucleotide triphosphates. This Rhizobium leguminosarum bv. trifolii (strain WSM2304) protein is CTP synthase.